The sequence spans 1060 residues: CCR4-NOT transcriptional complex subunit CAF120 (1060 aa).

Residues 1–29 (MRIFSGDNKVVDSPASNPGLMSPSNFGGD) form a disordered region. Positions 75–204 (RRYHEGVFLI…WNSAIRLCLY (130 aa)) constitute a PH domain. Residues 465 to 481 (KLSYGSKSSSNNSSKNS) are compositionally biased toward low complexity. Disordered regions lie at residues 465–588 (KLSY…ETSC), 718–742 (SINSNSDSDRINGSYSQVDFDNNND), and 801–1060 (EHRS…PYAQ). Positions 490 to 504 (LSSSSEQDLNNSDSP) are enriched in polar residues. Residues serine 491, serine 510, serine 518, serine 538, and serine 556 each carry the phosphoserine modification. A compositionally biased stretch (basic and acidic residues) spans 571 to 588 (NDRKATTPEKFERGETSC). Residues 718 to 731 (SINSNSDSDRINGS) are compositionally biased toward low complexity. The segment covering 801–814 (EHRSRHEVPKRSPE) has biased composition (basic and acidic residues). The segment covering 845–883 (SITPQRGQPVPSGQQISSYVQPANINSPNKMYGANNSAM) has biased composition (polar residues). Phosphoserine is present on residues serine 871 and serine 885. Composition is skewed to polar residues over residues 900–923 (QGWNNRPSPSNIYQRPHPSDTQPQ), 931–945 (PYSTGNRPNMQAQYH), and 1048–1060 (FMPSATTKNPYAQ).

It belongs to the CAF120 family. In terms of assembly, subunit of the 1.0 MDa CCR4-NOT core complex that contains CCR4, CAF1, CAF120, NOT1, NOT2, NOT3, NOT4, NOT5, CAF40 and CAF130. In the complex interacts with NOT1. The core complex probably is part of a less characterized 1.9 MDa CCR4-NOT complex.

The protein localises to the cytoplasm. It localises to the nucleus. The protein resides in the bud neck. In terms of biological role, acts as a component of the CCR4-NOT core complex, which in the nucleus seems to be a general transcription factor, and in the cytoplasm the major mRNA deadenylase involved in mRNA turnover. The NOT protein subcomplex negatively regulates the basal and activated transcription of many genes. Preferentially affects TC-type TATA element-dependent transcription. Could directly or indirectly inhibit component(s) of the general transcription machinery. The protein is CCR4-NOT transcriptional complex subunit CAF120 (CAF120) of Saccharomyces cerevisiae (strain YJM789) (Baker's yeast).